Here is a 206-residue protein sequence, read N- to C-terminus: Adenylyl-sulfate kinase (206 aa).

ATP is bound at residue Gly36–Ser43. Residue Ser110 is the Phosphoserine intermediate of the active site.

Belongs to the APS kinase family.

The catalysed reaction is adenosine 5'-phosphosulfate + ATP = 3'-phosphoadenylyl sulfate + ADP + H(+). It participates in sulfur metabolism; hydrogen sulfide biosynthesis; sulfite from sulfate: step 2/3. Its function is as follows. Catalyzes the synthesis of activated sulfate. The sequence is that of Adenylyl-sulfate kinase (cysC) from Buchnera aphidicola subsp. Acyrthosiphon pisum (strain APS) (Acyrthosiphon pisum symbiotic bacterium).